A 455-amino-acid polypeptide reads, in one-letter code: Bifunctional protein GlmU (455 aa).

The tract at residues Met1 to Arg226 is pyrophosphorylase. Residues Leu8–Gly11, Lys22, Gln73, Gly78–Thr79, Tyr99–Asp101, Gly136, Glu151, Asn166, and Asn224 contribute to the UDP-N-acetyl-alpha-D-glucosamine site. Asp101 serves as a coordination point for Mg(2+). Residue Asn224 coordinates Mg(2+). Residues Thr227–Lys247 form a linker region. Residues Gly248–Lys455 are N-acetyltransferase. The UDP-N-acetyl-alpha-D-glucosamine site is built by Arg330 and Lys348. The active-site Proton acceptor is the His360. Tyr363 and Asn374 together coordinate UDP-N-acetyl-alpha-D-glucosamine. Residues Ala377, Asn383 to Tyr384, Ser402, Ala420, and Arg437 contribute to the acetyl-CoA site.

The protein in the N-terminal section; belongs to the N-acetylglucosamine-1-phosphate uridyltransferase family. This sequence in the C-terminal section; belongs to the transferase hexapeptide repeat family. In terms of assembly, homotrimer. Mg(2+) serves as cofactor.

Its subcellular location is the cytoplasm. It catalyses the reaction alpha-D-glucosamine 1-phosphate + acetyl-CoA = N-acetyl-alpha-D-glucosamine 1-phosphate + CoA + H(+). The enzyme catalyses N-acetyl-alpha-D-glucosamine 1-phosphate + UTP + H(+) = UDP-N-acetyl-alpha-D-glucosamine + diphosphate. Its pathway is nucleotide-sugar biosynthesis; UDP-N-acetyl-alpha-D-glucosamine biosynthesis; N-acetyl-alpha-D-glucosamine 1-phosphate from alpha-D-glucosamine 6-phosphate (route II): step 2/2. It functions in the pathway nucleotide-sugar biosynthesis; UDP-N-acetyl-alpha-D-glucosamine biosynthesis; UDP-N-acetyl-alpha-D-glucosamine from N-acetyl-alpha-D-glucosamine 1-phosphate: step 1/1. The protein operates within bacterial outer membrane biogenesis; LPS lipid A biosynthesis. Functionally, catalyzes the last two sequential reactions in the de novo biosynthetic pathway for UDP-N-acetylglucosamine (UDP-GlcNAc). The C-terminal domain catalyzes the transfer of acetyl group from acetyl coenzyme A to glucosamine-1-phosphate (GlcN-1-P) to produce N-acetylglucosamine-1-phosphate (GlcNAc-1-P), which is converted into UDP-GlcNAc by the transfer of uridine 5-monophosphate (from uridine 5-triphosphate), a reaction catalyzed by the N-terminal domain. The protein is Bifunctional protein GlmU of Francisella tularensis subsp. holarctica (strain OSU18).